The chain runs to 91 residues: Acylphosphatase (91 aa).

Positions Cys-6–Leu-91 constitute an Acylphosphatase-like domain. Active-site residues include Arg-21 and Asn-39.

This sequence belongs to the acylphosphatase family.

It carries out the reaction an acyl phosphate + H2O = a carboxylate + phosphate + H(+). The sequence is that of Acylphosphatase (acyP) from Legionella pneumophila (strain Corby).